Here is a 185-residue protein sequence, read N- to C-terminus: Ribosome-recycling factor (185 aa).

It belongs to the RRF family.

It is found in the cytoplasm. Responsible for the release of ribosomes from messenger RNA at the termination of protein biosynthesis. May increase the efficiency of translation by recycling ribosomes from one round of translation to another. The protein is Ribosome-recycling factor of Chromohalobacter salexigens (strain ATCC BAA-138 / DSM 3043 / CIP 106854 / NCIMB 13768 / 1H11).